The primary structure comprises 691 residues: Mediator of RNA polymerase II transcription subunit 17 (691 aa).

A coiled-coil region spans residues 158–185 (KLESFDAAANKLLQSAQRLEEDIAAETK).

The protein belongs to the Mediator complex subunit 17 family. As to quaternary structure, component of the Mediator complex.

Its subcellular location is the nucleus. Its function is as follows. Component of the Mediator complex, a coactivator involved in the regulated transcription of nearly all RNA polymerase II-dependent genes. Mediator functions as a bridge to convey information from gene-specific regulatory proteins to the basal RNA polymerase II transcription machinery. Mediator is recruited to promoters by direct interactions with regulatory proteins and serves as a scaffold for the assembly of a functional preinitiation complex with RNA polymerase II and the general transcription factors. This is Mediator of RNA polymerase II transcription subunit 17 (SRB4) from Coccidioides immitis (strain RS) (Valley fever fungus).